A 225-amino-acid polypeptide reads, in one-letter code: Fibroblast growth factor 11 (225 aa).

The interval 1 to 28 (MAALASSLIRQKREVREPGGSRPVSAQR) is disordered.

Belongs to the heparin-binding growth factors family. Brain and eye, and in a segmental pattern of the embryonic body wall. In adult olfactory bulb, hippocampus and most concentrated in Purkinje cell layer of the cerebellum.

The protein resides in the nucleus. Functionally, probably involved in nervous system development and function. This is Fibroblast growth factor 11 (Fgf11) from Mus musculus (Mouse).